The primary structure comprises 288 residues: Elongation factor Ts (288 aa).

The segment at 82–85 (TDFV) is involved in Mg(2+) ion dislocation from EF-Tu.

Belongs to the EF-Ts family.

It localises to the cytoplasm. Functionally, associates with the EF-Tu.GDP complex and induces the exchange of GDP to GTP. It remains bound to the aminoacyl-tRNA.EF-Tu.GTP complex up to the GTP hydrolysis stage on the ribosome. In Chlorobium phaeovibrioides (strain DSM 265 / 1930) (Prosthecochloris vibrioformis (strain DSM 265)), this protein is Elongation factor Ts.